The following is a 205-amino-acid chain: Outer-membrane lipoprotein LolB (205 aa).

An N-terminal signal peptide occupies residues 1–17; that stretch reads MRLRLFLAASALALLSG. Cysteine 18 is lipidated: N-palmitoyl cysteine. A lipid anchor (S-diacylglycerol cysteine) is attached at cysteine 18.

The protein belongs to the LolB family. Monomer.

The protein localises to the cell outer membrane. Its function is as follows. Plays a critical role in the incorporation of lipoproteins in the outer membrane after they are released by the LolA protein. In Pseudomonas paraeruginosa (strain DSM 24068 / PA7) (Pseudomonas aeruginosa (strain PA7)), this protein is Outer-membrane lipoprotein LolB.